Reading from the N-terminus, the 173-residue chain is dCTP deaminase, dUMP-forming (173 aa).

DCTP contacts are provided by residues 93-98 (RSSIGR), D111, 119-121 (TLE), and Q138. The active-site Proton donor/acceptor is the E121.

Belongs to the dCTP deaminase family. Homotrimer.

The catalysed reaction is dCTP + 2 H2O = dUMP + NH4(+) + diphosphate. It functions in the pathway pyrimidine metabolism; dUMP biosynthesis; dUMP from dCTP: step 1/1. Functionally, bifunctional enzyme that catalyzes both the deamination of dCTP to dUTP and the hydrolysis of dUTP to dUMP without releasing the toxic dUTP intermediate. The polypeptide is dCTP deaminase, dUMP-forming (Leptospira interrogans serogroup Icterohaemorrhagiae serovar copenhageni (strain Fiocruz L1-130)).